The primary structure comprises 694 residues: Transcriptional activator HAA1 (694 aa).

A DNA-binding region (copper-fist) is located at residues 1–40; that stretch reads MVLINGIKYACERCIRGHRVTTCNHTDQPLMMIKPKGRPS. Zn(2+) contacts are provided by cysteine 11, cysteine 14, cysteine 23, and histidine 25. 2 disordered regions span residues 104-128 and 209-240; these read QKRHLRKSPSSSQKKGRSISRSQPM and FNFLTGNINETNQNHSNHQHSKSGNNWQDSSV. Residues 111–126 show a composition bias toward polar residues; it reads SPSSSQKKGRSISRSQ. Serine 125, serine 231, serine 241, and serine 291 each carry phosphoserine. Disordered regions lie at residues 332-388, 479-514, 566-588, and 650-677; these read FDIN…NGLF, EKERETERSPSSNYITDRPFTRKPRSSSIDVNHRYP, SSIHSVPQSINSPRMPKTGSRQD, and MISTPSGRNDLPDTSPMSSIQTASPPSQ. Residues 336–349 show a composition bias toward polar residues; it reads DNCNRINSKSYSKT. A compositionally biased stretch (low complexity) spans 350–378; the sequence is NSMNGNGMNNSNNNNINSNGNDKNNNNSS. 2 stretches are compositionally biased toward polar residues: residues 566-577 and 664-677; these read SSIHSVPQSINS and SPMSSIQTASPPSQ.

It localises to the nucleus. Its function is as follows. Regulates the transcription of a set of genes, many of which encode membrane proteins. Among the genes regulated are YGR138C and YRO2. Does not seem to be dependent on copper. The chain is Transcriptional activator HAA1 (HAA1) from Saccharomyces cerevisiae (strain ATCC 204508 / S288c) (Baker's yeast).